A 150-amino-acid polypeptide reads, in one-letter code: UPF0178 protein Maqu_2186 (150 aa).

It belongs to the UPF0178 family.

This is UPF0178 protein Maqu_2186 from Marinobacter nauticus (strain ATCC 700491 / DSM 11845 / VT8) (Marinobacter aquaeolei).